We begin with the raw amino-acid sequence, 674 residues long: MTLEEARKRVNELRDLIRYHNYRYYVLADPEISDAEYDRLLRELKELEERFPELKSPDSPTEQVGAKPLEATFRPIRHPTRMYSLDNAFNFDELKAFEERIGRALGREGPFAYTVEHKVDGLSVNLYYEDGVLVWGATRGDGEVGEEVTQNLLTIPTIPRRVKGVPERLEVRGEVYMPIEAFLRLNEELEEKGEKIFKNPRNAAAGSLRQKDPRITARRGLRATFYALGLGLEESGLKTQLDLLHWLREKGFPVEHGFARAEGAEGVERIYQGWLKERRSLPFEADGVVVKLDELSLWRELGYTARAPRFAIAYKFPAEEKETRLLQVVFQVGRTGRVTPVGILEPVFIEGSVVSRVTLHNESYIEELDVRIGDWVLVHKAGGVIPEVLRVLKEKRTGEERPIRWPETCPECGHRLVKEGKVHRCPNPLCPAKRFEAIRHYASRKAMDIGGLGEKLIEKLLEKGLVKDVADLYRLKKEDLLGLERMGEKSAQNLLRQIEESKGRGLERLLYALGLPGVGEVLARNLAAHFGTMDRLLEASLEELLQVEEVGELTARGIYETLQDPAFRDLVRRLKEAGVVMEAKERGEEALKGLTFVITGELSRPREEVKALLRRLGAKVTDSVSRKTSYLVVGENPGSKLEKARALGVPTLTEEELYRLIEERTGKPVETLAS.

NAD(+) contacts are provided by residues 34-38 (DAEYD), 84-85 (SL), and Glu-116. Residue Lys-118 is the N6-AMP-lysine intermediate of the active site. NAD(+)-binding residues include Arg-139, Glu-174, Lys-291, and Lys-315. 4 residues coordinate Zn(2+): Cys-409, Cys-412, Cys-425, and Cys-430. A BRCT domain is found at 586–674 (RGEEALKGLT…TGKPVETLAS (89 aa)).

It belongs to the NAD-dependent DNA ligase family. LigA subfamily. Mg(2+) is required as a cofactor. Mn(2+) serves as cofactor.

The enzyme catalyses NAD(+) + (deoxyribonucleotide)n-3'-hydroxyl + 5'-phospho-(deoxyribonucleotide)m = (deoxyribonucleotide)n+m + AMP + beta-nicotinamide D-nucleotide.. Its function is as follows. DNA ligase that catalyzes the formation of phosphodiester linkages between 5'-phosphoryl and 3'-hydroxyl groups in double-stranded DNA using NAD as a coenzyme and as the energy source for the reaction. It is essential for DNA replication and repair of damaged DNA. The sequence is that of DNA ligase from Thermus scotoductus.